Reading from the N-terminus, the 36-residue chain is GSCLELGKYCDGSKDDCQCCRDNAYCGCDIFGYNWE.

As to expression, expressed by the venom gland.

It localises to the secreted. Functionally, not toxic to mice by intracerebroventricular injection. The protein is U14-ctenitoxin-Co1b of Ctenus ornatus (Brazilian spider).